We begin with the raw amino-acid sequence, 141 residues long: Nucleoside diphosphate kinase (141 aa).

The ATP site is built by Lys-11, Phe-59, Arg-87, Thr-93, Arg-104, and Asn-114. His-117 functions as the Pros-phosphohistidine intermediate in the catalytic mechanism.

It belongs to the NDK family. As to quaternary structure, homotetramer. Mg(2+) serves as cofactor.

It localises to the cytoplasm. It carries out the reaction a 2'-deoxyribonucleoside 5'-diphosphate + ATP = a 2'-deoxyribonucleoside 5'-triphosphate + ADP. It catalyses the reaction a ribonucleoside 5'-diphosphate + ATP = a ribonucleoside 5'-triphosphate + ADP. In terms of biological role, major role in the synthesis of nucleoside triphosphates other than ATP. The ATP gamma phosphate is transferred to the NDP beta phosphate via a ping-pong mechanism, using a phosphorylated active-site intermediate. The polypeptide is Nucleoside diphosphate kinase (Cellvibrio japonicus (strain Ueda107) (Pseudomonas fluorescens subsp. cellulosa)).